Here is a 399-residue protein sequence, read N- to C-terminus: L-methionine gamma-lyase (399 aa).

Pyridoxal 5'-phosphate-binding positions include 59–61 and 89–90; these read YTR and GM. A substrate-binding site is contributed by Tyr-114. 209–211 lines the pyridoxal 5'-phosphate pocket; that stretch reads SAT. Lys-212 carries the N6-(pyridoxal phosphate)lysine modification. Position 376 (Arg-376) interacts with substrate.

The protein belongs to the trans-sulfuration enzymes family. L-methionine gamma-lyase subfamily. As to quaternary structure, homotetramer; dimer of active dimers. It depends on pyridoxal 5'-phosphate as a cofactor.

The catalysed reaction is L-methionine + H2O = methanethiol + 2-oxobutanoate + NH4(+). Functionally, catalyzes the alpha,gamma-elimination of L-methionine to produce methanethiol, 2-oxobutanoate and ammonia. This chain is L-methionine gamma-lyase, found in Pseudomonas deceptionensis.